The sequence spans 423 residues: Protein CLP1 homolog (423 aa).

ATP-binding positions include E16, K57, and 119-124; that span reads DVGKST.

Belongs to the Clp1 family. Clp1 subfamily.

The protein resides in the nucleus. Functionally, required for endonucleolytic cleavage during polyadenylation-dependent pre-mRNA 3'-end formation. The chain is Protein CLP1 homolog (cbc) from Drosophila simulans (Fruit fly).